Here is a 352-residue protein sequence, read N- to C-terminus: tRNA-specific 2-thiouridylase MnmA (352 aa).

ATP is bound by residues 7 to 14 and L33; that span reads GLSGGVDS. The active-site Nucleophile is the C94. C94 and C193 are joined by a disulfide. G119 is an ATP binding site. The tract at residues 143 to 145 is interaction with tRNA; it reads KDQ. The active-site Cysteine persulfide intermediate is C193. The segment at 298–299 is interaction with tRNA; that stretch reads RY.

It belongs to the MnmA/TRMU family.

It localises to the cytoplasm. It catalyses the reaction S-sulfanyl-L-cysteinyl-[protein] + uridine(34) in tRNA + AH2 + ATP = 2-thiouridine(34) in tRNA + L-cysteinyl-[protein] + A + AMP + diphosphate + H(+). Catalyzes the 2-thiolation of uridine at the wobble position (U34) of tRNA, leading to the formation of s(2)U34. The polypeptide is tRNA-specific 2-thiouridylase MnmA (Nostoc sp. (strain PCC 7120 / SAG 25.82 / UTEX 2576)).